A 136-amino-acid chain; its full sequence is Histone H3.3 (136 aa).

The tract at residues 1 to 43 (MARTKQTARKSTGGKAPRKQLATKAARKSAPSTGGVKKPHRYR) is disordered. Position 5 is an N6,N6,N6-trimethyllysine; alternate (K5). An N6,N6-dimethyllysine; alternate modification is found at K5. N6-methyllysine; alternate occurs at positions 5 and 10. The residue at position 10 (K10) is an N6-acetyllysine; alternate. S11 is subject to Phosphoserine. K15 is modified (N6,N6-dimethyllysine; alternate). 5 positions are modified to N6-acetyllysine; alternate: K15, K19, K24, K28, and K37. An N6-methyllysine; alternate mark is found at K19, K24, K28, and K37. 2 positions are modified to N6,N6,N6-trimethyllysine; alternate: K28 and K37. 2 positions are modified to N6,N6-dimethyllysine; alternate: K28 and K37. N6-acetyllysine occurs at positions 57 and 65. K80 is subject to N6,N6,N6-trimethyllysine; alternate. An N6,N6-dimethyllysine; alternate modification is found at K80. K80 carries the N6-methyllysine; alternate modification.

It belongs to the histone H3 family. As to quaternary structure, the nucleosome is a histone octamer containing two molecules each of H2A, H2B, H3 and H4 assembled in one H3-H4 heterotetramer and two H2A-H2B heterodimers. The octamer wraps approximately 147 bp of DNA. Post-translationally, phosphorylated at Ser-11. This is required for transcriptional activation through TBP recruitment to the promoters. Phosphorylation at Ser-11 also promotes subsequent acetylation at Lys-15. In terms of processing, mono-, di- and trimethylation of Lys-5 by the COMPASS complex activates gene expression by regulating transcription elongation and plays a role in telomere length maintenance. Lys-5 methylation enrichment correlates with transcription levels, and occurs in a 5' to 3' gradient with tri-methyl enrichment at the 5'-end of genes, shifting to di-methyl and then mono-methyl. The COMPASS mediated di and trimethylation of Lys-5 requires histone H2B monoubiquitination. Methylation of Lys-37 by SET2 represses gene expression. Methylation of Lys-80 by DOT1 is required for association of SIR proteins with telomeric regions and for telomeric silencing. Acetylation of histone H3 leads to transcriptional activation. Acetylation at Lys-15 is promoted by the phosphorylation at Ser-11. Acetylation at Lys-57 occurs predominantly in newly synthesized H3 molecule during G1, S and G2/M of the cell cycle and may be involved in DNA repair.

It is found in the nucleus. The protein localises to the chromosome. Core component of nucleosome. Nucleosomes wrap and compact DNA into chromatin, limiting DNA accessibility to the cellular machineries which require DNA as a template. Histones thereby play a central role in transcription regulation, DNA repair, DNA replication and chromosomal stability. DNA accessibility is regulated via a complex set of post-translational modifications of histones, also called histone code, and nucleosome remodeling. In Trichinella pseudospiralis (Parasitic roundworm), this protein is Histone H3.3 (HHT3).